The primary structure comprises 186 residues: Transcription factor FapR (186 aa).

The protein belongs to the FapR family.

In terms of biological role, transcriptional factor involved in regulation of membrane lipid biosynthesis by repressing genes involved in fatty acid and phospholipid metabolism. The sequence is that of Transcription factor FapR from Staphylococcus epidermidis (strain ATCC 35984 / DSM 28319 / BCRC 17069 / CCUG 31568 / BM 3577 / RP62A).